Here is a 232-residue protein sequence, read N- to C-terminus: Dehydrogenase OXI1 (232 aa).

Positions 1-20 (MTETFKVAITFVSPSSEALA) are cleaved as a signal peptide. Leucine 19 provides a ligand contact to NADP(+). An N-linked (GlcNAc...) asparagine glycan is attached at asparagine 28. NADP(+)-binding residues include aspartate 42, asparagine 70, and lysine 103. Asparagine 117 carries an N-linked (GlcNAc...) asparagine glycan. Active-site proton donor residues include serine 119 and serine 121. Positions 133, 137, and 168 each coordinate NADP(+). Tyrosine 133 functions as the Proton acceptor in the catalytic mechanism. Lysine 137 (lowers pKa of active site Tyr) is an active-site residue.

This sequence belongs to the short-chain dehydrogenases/reductases (SDR) family.

The enzyme catalyses a primary alcohol + NAD(+) = an aldehyde + NADH + H(+). The catalysed reaction is a secondary alcohol + NAD(+) = a ketone + NADH + H(+). It participates in mycotoxin biosynthesis. Dehydrogenase; part of the Tox1A locus, one of the 2 loci that mediate the biosynthesis of T-toxin, a family of linear polyketides 37 to 45 carbons in length, of which the major component is 41 carbons, and which leads to high virulence to maize. One of the PKSs (PKS1 or PKS2) could synthesize a precursor, used subsequently by the other PKS as starter unit, to add additional carbons. Variability in the length of the final carbon backbone C35-47 could be achieved by varying the number of condensation cycles, or use of different starter or extender units or might be due to decarboxylation of the penultimate product, catalyzed by DEC1. Additional proteins are required for the biosynthesis of T-toxin, including oxidoreductases RED1, RED2, RED3, LAM1 and OXI1, as well as esterase TOX9. This is Dehydrogenase OXI1 from Cochliobolus heterostrophus (strain C4 / ATCC 48331 / race T) (Southern corn leaf blight fungus).